The sequence spans 518 residues: FAD-dependent monooxygenase tpcD (518 aa).

The N-terminal stretch at Met1–Ala22 is a signal peptide. N-linked (GlcNAc...) asparagine glycosylation occurs at Asn61. The region spanning Gln75–Gln246 is the FAD-binding PCMH-type domain. His112 is modified (pros-8alpha-FAD histidine). N-linked (GlcNAc...) asparagine glycans are attached at residues Asn163, Asn208, Asn216, and Asn346.

Belongs to the oxygen-dependent FAD-linked oxidoreductase family. The cofactor is FAD.

It participates in secondary metabolite biosynthesis; terpenoid biosynthesis. In terms of biological role, FAD-dependent monooxygenase; part of the gene cluster that mediates the biosynthesis of terpestacin. The bifunctional terpene synthase tpcA converts isopentenyl diphosphate (IPP) and dimethylallyl diphosphate (DMAPP) into the sesterterpene preterpestacin I. The C-terminal prenyltransferase (PT) domain of tpcA catalyzes formation of GFPP, whereas the N-terminal terpene cyclase (TC) domain catalyzes the cyclization of GFPP into preterpestacin I. The cytochrome P450 monooxygenase tpcB then hydroxylates preterpestacin I to yield 24-hydroxypreterpstacin I (renamed as preterpestacin II) whereas the cytochrome P450 monooxygenase tpcC further hydroxylates preterpestacin II to yield 16,17-dihydroxypreterpestacin II (renamed as preterpestacin III). Finally, the FAD-dependent monooxygenase tpcD converts preterpestacin III into terpestacin. In Cochliobolus heterostrophus (strain C5 / ATCC 48332 / race O) (Southern corn leaf blight fungus), this protein is FAD-dependent monooxygenase tpcD.